Here is a 202-residue protein sequence, read N- to C-terminus: Na(+)-translocating NADH-quinone reductase subunit E (202 aa).

A run of 6 helical transmembrane segments spans residues 11–31 (AIFV…FLAI), 35–55 (IEAA…TVPV), 81–101 (FLGL…MEMV), 114–134 (GVFL…LFMV), 144–164 (LVYG…LAGI), and 180–200 (LGIT…FSGI).

This sequence belongs to the NqrDE/RnfAE family. As to quaternary structure, composed of six subunits; NqrA, NqrB, NqrC, NqrD, NqrE and NqrF.

The protein resides in the cell inner membrane. The catalysed reaction is a ubiquinone + n Na(+)(in) + NADH + H(+) = a ubiquinol + n Na(+)(out) + NAD(+). Functionally, NQR complex catalyzes the reduction of ubiquinone-1 to ubiquinol by two successive reactions, coupled with the transport of Na(+) ions from the cytoplasm to the periplasm. NqrA to NqrE are probably involved in the second step, the conversion of ubisemiquinone to ubiquinol. In Marinobacter nauticus (strain ATCC 700491 / DSM 11845 / VT8) (Marinobacter aquaeolei), this protein is Na(+)-translocating NADH-quinone reductase subunit E.